The following is a 734-amino-acid chain: Photosystem I P700 chlorophyll a apoprotein A2 (734 aa).

A run of 8 helical transmembrane segments spans residues 46–69 (IFAS…FHVA), 135–158 (LYTG…LHLQ), 175–199 (LNHH…HVAI), 273–291 (MAHH…GHMY), 330–353 (LHFQ…QHMY), 369–395 (AALY…IFFI), 417–439 (AIIS…LYVH), and 517–535 (FLVH…LILV). Residues cysteine 559 and cysteine 568 each coordinate [4Fe-4S] cluster. The next 2 helical transmembrane spans lie at 575–596 (AFYL…YWHW) and 643–665 (LSVW…MFLI). The chlorophyll a site is built by histidine 654, methionine 662, and tyrosine 670. Tryptophan 671 serves as a coordination point for phylloquinone. Residues 707–727 (LVGLAHFSVGYIFTYAAFLIA) traverse the membrane as a helical segment.

This sequence belongs to the PsaA/PsaB family. In terms of assembly, the PsaA/B heterodimer binds the P700 chlorophyll special pair and subsequent electron acceptors. PSI consists of a core antenna complex that captures photons, and an electron transfer chain that converts photonic excitation into a charge separation. The eukaryotic PSI reaction center is composed of at least 11 subunits. P700 is a chlorophyll a/chlorophyll a' dimer, A0 is one or more chlorophyll a, A1 is one or both phylloquinones and FX is a shared 4Fe-4S iron-sulfur center. serves as cofactor.

The protein localises to the plastid. Its subcellular location is the chloroplast thylakoid membrane. The enzyme catalyses reduced [plastocyanin] + hnu + oxidized [2Fe-2S]-[ferredoxin] = oxidized [plastocyanin] + reduced [2Fe-2S]-[ferredoxin]. Functionally, psaA and PsaB bind P700, the primary electron donor of photosystem I (PSI), as well as the electron acceptors A0, A1 and FX. PSI is a plastocyanin-ferredoxin oxidoreductase, converting photonic excitation into a charge separation, which transfers an electron from the donor P700 chlorophyll pair to the spectroscopically characterized acceptors A0, A1, FX, FA and FB in turn. Oxidized P700 is reduced on the lumenal side of the thylakoid membrane by plastocyanin. The protein is Photosystem I P700 chlorophyll a apoprotein A2 of Solanum tuberosum (Potato).